Consider the following 369-residue polypeptide: Queuine tRNA-ribosyltransferase accessory subunit 2 (369 aa).

Residues 263-282 (SSKLTEVEEENGNDSSNDQD) are disordered. Zn(2+) is bound by residues C308, C310, C313, and H339.

It belongs to the queuine tRNA-ribosyltransferase family. QTRT2 subfamily. As to quaternary structure, heterodimer of a catalytic subunit and an accessory subunit. It depends on Zn(2+) as a cofactor.

The protein localises to the cytoplasm. Non-catalytic subunit of the queuine tRNA-ribosyltransferase (TGT) that catalyzes the base-exchange of a guanine (G) residue with queuine (Q) at position 34 (anticodon wobble position) in tRNAs with GU(N) anticodons (tRNA-Asp, -Asn, -His and -Tyr), resulting in the hypermodified nucleoside queuosine (7-(((4,5-cis-dihydroxy-2-cyclopenten-1-yl)amino)methyl)-7-deazaguanosine). In Trichoplax adhaerens (Trichoplax reptans), this protein is Queuine tRNA-ribosyltransferase accessory subunit 2.